The sequence spans 361 residues: MKATLRTRLDGFQERFEELAALLAEPDVIADQARFRDYSREYAELEPLIEAWRSYRRTEDDLEAAEQMREDSDPEMRELAEEEWREAQARLEALDADVKRLLVPRDPDDASNVFLEIRAGTGGDEAALFAGDLFRMYSRYAEKVGWRIEVINASHGEQGGYKELIARVRGDNVYARLKFESGAHRVQRVPATESQGRIHTSACTVAVMAEASAVGEVELNSNDLRVDTFRSSGAGGQHVNTTDSAIRITHLPSGLVVECQEERSQHKNRAKAMALLAARLKQSAVDAQRQQQADTRRSLVGSGDRSERIRTYNFPQGRITDHRINLTLYKLGDVMAGELGEVIDPLIHEYQAEQLSALQAS.

N5-methylglutamine is present on Q237.

The protein belongs to the prokaryotic/mitochondrial release factor family. Post-translationally, methylated by PrmC. Methylation increases the termination efficiency of RF1.

The protein resides in the cytoplasm. Its function is as follows. Peptide chain release factor 1 directs the termination of translation in response to the peptide chain termination codons UAG and UAA. This chain is Peptide chain release factor 1, found in Chromohalobacter salexigens (strain ATCC BAA-138 / DSM 3043 / CIP 106854 / NCIMB 13768 / 1H11).